Reading from the N-terminus, the 822-residue chain is DNA gyrase subunit A (822 aa).

The region spanning Leu32 to Leu497 is the Topo IIA-type catalytic domain. The active-site O-(5'-phospho-DNA)-tyrosine intermediate is the Tyr120. A GyrA-box motif is present at residues Gln524–Gly530.

The protein belongs to the type II topoisomerase GyrA/ParC subunit family. As to quaternary structure, heterotetramer, composed of two GyrA and two GyrB chains. In the heterotetramer, GyrA contains the active site tyrosine that forms a transient covalent intermediate with DNA, while GyrB binds cofactors and catalyzes ATP hydrolysis.

The protein resides in the cytoplasm. It carries out the reaction ATP-dependent breakage, passage and rejoining of double-stranded DNA.. A type II topoisomerase that negatively supercoils closed circular double-stranded (ds) DNA in an ATP-dependent manner to modulate DNA topology and maintain chromosomes in an underwound state. Negative supercoiling favors strand separation, and DNA replication, transcription, recombination and repair, all of which involve strand separation. Also able to catalyze the interconversion of other topological isomers of dsDNA rings, including catenanes and knotted rings. Type II topoisomerases break and join 2 DNA strands simultaneously in an ATP-dependent manner. This chain is DNA gyrase subunit A, found in Streptococcus pneumoniae (strain ATCC BAA-255 / R6).